Here is a 176-residue protein sequence, read N- to C-terminus: ATP-dependent protease subunit HslV (176 aa).

Residue T2 is part of the active site. G157, C160, and T163 together coordinate Na(+).

It belongs to the peptidase T1B family. HslV subfamily. A double ring-shaped homohexamer of HslV is capped on each side by a ring-shaped HslU homohexamer. The assembly of the HslU/HslV complex is dependent on binding of ATP.

It localises to the cytoplasm. It catalyses the reaction ATP-dependent cleavage of peptide bonds with broad specificity.. Allosterically activated by HslU binding. Functionally, protease subunit of a proteasome-like degradation complex believed to be a general protein degrading machinery. This Ectopseudomonas mendocina (strain ymp) (Pseudomonas mendocina) protein is ATP-dependent protease subunit HslV.